We begin with the raw amino-acid sequence, 370 residues long: Protein-tyrosine sulfotransferase 1 (370 aa).

Residues 1–8 (MVGKLKQN) lie on the Cytoplasmic side of the membrane. A helical; Signal-anchor for type II membrane protein transmembrane segment spans residues 9-25 (LLLACLVISSVTVFYLG). The Lumenal segment spans residues 26-370 (QHAMECHHRI…KEKPQTEQVE (345 aa)). A glycan (N-linked (GlcNAc...) asparagine) is linked at N60. 79-83 (RSGTT) is a binding site for 3'-phosphoadenylyl sulfate. C97 and C157 form a disulfide bridge. The active-site Proton donor/acceptor is E100. The tract at residues 102–106 (RVIPR) is interaction with peptide substrate. Positions 184, 192, and 196 each coordinate 3'-phosphoadenylyl sulfate. C226 and C234 are disulfide-bonded. Y239 contributes to the 3'-phosphoadenylyl sulfate binding site. N-linked (GlcNAc...) asparagine glycosylation is present at N262. Residues 286–295 (STDQVIKPVN) and K301 each bind 3'-phosphoadenylyl sulfate.

This sequence belongs to the protein sulfotransferase family. In terms of assembly, homodimer. Can also form heterodimers with TPST2. N-glycosylated. In terms of tissue distribution, ubiquitous. Detected in heart, brain, placenta, lung, liver, skeletal muscle, kidney and pancreas.

It localises to the golgi apparatus membrane. The catalysed reaction is L-tyrosyl-[protein] + 3'-phosphoadenylyl sulfate = O-sulfo-L-tyrosine-[protein] + adenosine 3',5'-bisphosphate + H(+). Its function is as follows. Catalyzes the O-sulfation of tyrosine residues within acidic motifs of polypeptides, using 3'-phosphoadenylyl sulfate (PAPS) as cosubstrate. This Homo sapiens (Human) protein is Protein-tyrosine sulfotransferase 1 (TPST1).